A 636-amino-acid polypeptide reads, in one-letter code: 1-deoxy-D-xylulose-5-phosphate synthase (636 aa).

Thiamine diphosphate is bound by residues His-72 and 113-115 (GHA). Asp-144 is a binding site for Mg(2+). Thiamine diphosphate-binding positions include 145–146 (GA), Asn-174, Tyr-287, and Glu-370. A Mg(2+)-binding site is contributed by Asn-174.

Belongs to the transketolase family. DXPS subfamily. As to quaternary structure, homodimer. Mg(2+) serves as cofactor. The cofactor is thiamine diphosphate.

The catalysed reaction is D-glyceraldehyde 3-phosphate + pyruvate + H(+) = 1-deoxy-D-xylulose 5-phosphate + CO2. The protein operates within metabolic intermediate biosynthesis; 1-deoxy-D-xylulose 5-phosphate biosynthesis; 1-deoxy-D-xylulose 5-phosphate from D-glyceraldehyde 3-phosphate and pyruvate: step 1/1. In terms of biological role, catalyzes the acyloin condensation reaction between C atoms 2 and 3 of pyruvate and glyceraldehyde 3-phosphate to yield 1-deoxy-D-xylulose-5-phosphate (DXP). This Microcystis aeruginosa (strain NIES-843 / IAM M-2473) protein is 1-deoxy-D-xylulose-5-phosphate synthase.